The following is a 239-amino-acid chain: Small ribosomal subunit protein uS3c (239 aa).

The KH type-2 domain occupies 43–139; sequence IKNYIQKNRK…RLNIGIEKVK (97 aa).

The protein belongs to the universal ribosomal protein uS3 family. Part of the 30S ribosomal subunit.

Its subcellular location is the plastid. It is found in the chloroplast. This Oryza nivara (Indian wild rice) protein is Small ribosomal subunit protein uS3c (rps3).